The sequence spans 378 residues: Lipid-A-disaccharide synthase (378 aa).

This sequence belongs to the LpxB family.

The catalysed reaction is a lipid X + a UDP-2-N,3-O-bis[(3R)-3-hydroxyacyl]-alpha-D-glucosamine = a lipid A disaccharide + UDP + H(+). It functions in the pathway bacterial outer membrane biogenesis; LPS lipid A biosynthesis. Its function is as follows. Condensation of UDP-2,3-diacylglucosamine and 2,3-diacylglucosamine-1-phosphate to form lipid A disaccharide, a precursor of lipid A, a phosphorylated glycolipid that anchors the lipopolysaccharide to the outer membrane of the cell. The polypeptide is Lipid-A-disaccharide synthase (Pseudomonas aeruginosa (strain LESB58)).